The following is a 411-amino-acid chain: Probable glutamate dehydrogenase 3 (411 aa).

Residue lysine 102 is part of the active site.

Belongs to the Glu/Leu/Phe/Val dehydrogenases family.

The catalysed reaction is L-glutamate + NAD(+) + H2O = 2-oxoglutarate + NH4(+) + NADH + H(+). It carries out the reaction L-glutamate + NADP(+) + H2O = 2-oxoglutarate + NH4(+) + NADPH + H(+). This Arabidopsis thaliana (Mouse-ear cress) protein is Probable glutamate dehydrogenase 3 (GSH3).